A 265-amino-acid chain; its full sequence is 4-hydroxy-tetrahydrodipicolinate reductase (265 aa).

Residues 9–14, 100–102, and 124–127 each bind NAD(+); these read GALGRM, GTT, and SPNM. The active-site Proton donor/acceptor is His-158. His-159 provides a ligand contact to (S)-2,3,4,5-tetrahydrodipicolinate. Lys-162 serves as the catalytic Proton donor. 168-169 is a (S)-2,3,4,5-tetrahydrodipicolinate binding site; that stretch reads GT.

It belongs to the DapB family.

Its subcellular location is the cytoplasm. It catalyses the reaction (S)-2,3,4,5-tetrahydrodipicolinate + NAD(+) + H2O = (2S,4S)-4-hydroxy-2,3,4,5-tetrahydrodipicolinate + NADH + H(+). The enzyme catalyses (S)-2,3,4,5-tetrahydrodipicolinate + NADP(+) + H2O = (2S,4S)-4-hydroxy-2,3,4,5-tetrahydrodipicolinate + NADPH + H(+). The protein operates within amino-acid biosynthesis; L-lysine biosynthesis via DAP pathway; (S)-tetrahydrodipicolinate from L-aspartate: step 4/4. In terms of biological role, catalyzes the conversion of 4-hydroxy-tetrahydrodipicolinate (HTPA) to tetrahydrodipicolinate. The sequence is that of 4-hydroxy-tetrahydrodipicolinate reductase from Aquifex aeolicus (strain VF5).